A 331-amino-acid chain; its full sequence is Cilia- and flagella-associated protein 119 (331 aa).

The residue at position 34 (Ser-34) is a Phosphoserine. Disordered regions lie at residues 236–271 (LWPESETEKEESKEMEEQAVTPQKEELETVAPPEPE) and 309–331 (SSKLTALERPFQLPPGKGKSKTK). The stretch at 286–317 (VNKELEQLQGLVEERLKASEERLSSKLTALER) forms a coiled coil.

The protein resides in the cell projection. It is found in the cilium. Its subcellular location is the flagellum. The protein localises to the cytoplasmic vesicle. It localises to the secretory vesicle. The protein resides in the acrosome. It is found in the cytoplasm. The chain is Cilia- and flagella-associated protein 119 from Homo sapiens (Human).